A 327-amino-acid polypeptide reads, in one-letter code: Ketol-acid reductoisomerase (NADP(+)) (327 aa).

In terms of domain architecture, KARI N-terminal Rossmann spans 2–182; the sequence is AKIYTDKDAS…GATRAGVIET (181 aa). Residues 25 to 28, Arg48, Ser53, and 83 to 86 contribute to the NADP(+) site; these read YGIQ and DMEQ. His108 is an active-site residue. Gly134 contacts NADP(+). Residues 183 to 327 enclose the KARI C-terminal knotted domain; the sequence is TFAEETETDL…GAEMRKLLFG (145 aa). Mg(2+)-binding residues include Asp191, Glu195, Glu227, and Glu231. Ser252 provides a ligand contact to substrate.

This sequence belongs to the ketol-acid reductoisomerase family. Requires Mg(2+) as cofactor.

The catalysed reaction is (2R)-2,3-dihydroxy-3-methylbutanoate + NADP(+) = (2S)-2-acetolactate + NADPH + H(+). The enzyme catalyses (2R,3R)-2,3-dihydroxy-3-methylpentanoate + NADP(+) = (S)-2-ethyl-2-hydroxy-3-oxobutanoate + NADPH + H(+). The protein operates within amino-acid biosynthesis; L-isoleucine biosynthesis; L-isoleucine from 2-oxobutanoate: step 2/4. It functions in the pathway amino-acid biosynthesis; L-valine biosynthesis; L-valine from pyruvate: step 2/4. Involved in the biosynthesis of branched-chain amino acids (BCAA). Catalyzes an alkyl-migration followed by a ketol-acid reduction of (S)-2-acetolactate (S2AL) to yield (R)-2,3-dihydroxy-isovalerate. In the isomerase reaction, S2AL is rearranged via a Mg-dependent methyl migration to produce 3-hydroxy-3-methyl-2-ketobutyrate (HMKB). In the reductase reaction, this 2-ketoacid undergoes a metal-dependent reduction by NADPH to yield (R)-2,3-dihydroxy-isovalerate. The sequence is that of Ketol-acid reductoisomerase (NADP(+)) from Pyrobaculum neutrophilum (strain DSM 2338 / JCM 9278 / NBRC 100436 / V24Sta) (Thermoproteus neutrophilus).